The following is a 251-amino-acid chain: Triosephosphate isomerase (251 aa).

9–11 (NWK) contacts substrate. Histidine 95 serves as the catalytic Electrophile. Glutamate 167 functions as the Proton acceptor in the catalytic mechanism. Substrate is bound by residues glycine 173, serine 213, and 234-235 (GG). Serine 213 is subject to Phosphoserine.

Belongs to the triosephosphate isomerase family. In terms of assembly, homodimer.

The protein resides in the cytoplasm. It carries out the reaction D-glyceraldehyde 3-phosphate = dihydroxyacetone phosphate. The protein operates within carbohydrate biosynthesis; gluconeogenesis. Its pathway is carbohydrate degradation; glycolysis; D-glyceraldehyde 3-phosphate from glycerone phosphate: step 1/1. Its function is as follows. Involved in the gluconeogenesis. Catalyzes stereospecifically the conversion of dihydroxyacetone phosphate (DHAP) to D-glyceraldehyde-3-phosphate (G3P). This chain is Triosephosphate isomerase, found in Bacillus cereus (strain ATCC 10987 / NRS 248).